Reading from the N-terminus, the 514-residue chain is Probable transposase for insertion sequence element IS1353 (514 aa).

Residues 172 to 216 adopt a coiled-coil conformation; the sequence is KGDTSLEQRHEALLRELAELESQNQRLRMENAILEKASELIKKDM. In terms of domain architecture, Integrase catalytic spans 346–510; it reads HASAPNTKWL…SPIEYRHAVG (165 aa). 2 residues coordinate Mg(2+): aspartate 357 and aspartate 417.

This sequence belongs to the transposase 8 family.

Functionally, probably involved in the transposition of insertion sequence IS1353. This Shigella flexneri protein is Probable transposase for insertion sequence element IS1353.